A 392-amino-acid chain; its full sequence is Putative RNA-binding protein Luc7-like 2 (392 aa).

Ser-18 is modified (phosphoserine). Residues 102–177 (EVSKKRLAET…EAEEVYRNSM (76 aa)) are a coiled coil. Over residues 235–257 (KQEKRNQERLKRREEREREEREK) the composition is skewed to basic and acidic residues. A disordered region spans residues 235 to 392 (KQEKRNQERL…SSEEREAGEI (158 aa)). Positions 258–321 (LRRSRSHSKN…RSRSHQRSRH (64 aa)) are enriched in basic residues. A 5-hydroxylysine; by JMJD6 mark is found at Lys-266 and Lys-269. Basic and acidic residues-rich tracts occupy residues 337 to 364 (KERF…DRDR) and 377 to 392 (RSED…AGEI).

Belongs to the Luc7 family. As to quaternary structure, interacts with SCNM1. In terms of tissue distribution, all isoforms are expressed in brain, kidney, heart, thymus, stomach, skeletal muscle, testis and spinal cord.

The protein resides in the nucleus speckle. It is found in the nucleus. It localises to the nucleoplasm. May bind to RNA via its Arg/Ser-rich domain. This chain is Putative RNA-binding protein Luc7-like 2 (Luc7l2), found in Mus musculus (Mouse).